The following is a 135-amino-acid chain: ATP synthase epsilon chain (135 aa).

It belongs to the ATPase epsilon chain family. In terms of assembly, F-type ATPases have 2 components, CF(1) - the catalytic core - and CF(0) - the membrane proton channel. CF(1) has five subunits: alpha(3), beta(3), gamma(1), delta(1), epsilon(1). CF(0) has three main subunits: a, b and c.

Its subcellular location is the cell inner membrane. In terms of biological role, produces ATP from ADP in the presence of a proton gradient across the membrane. This chain is ATP synthase epsilon chain, found in Rhizobium etli (strain CIAT 652).